The chain runs to 247 residues: ATP synthase subunit a, chloroplastic (247 aa).

A run of 5 helical transmembrane segments spans residues 36–56 (GQVL…SIAG), 95–115 (IPFL…GALI), 134–154 (INTT…AGFS), 199–219 (LVVG…IMLL), and 220–240 (GLFT…AYIG).

This sequence belongs to the ATPase A chain family. In terms of assembly, F-type ATPases have 2 components, CF(1) - the catalytic core - and CF(0) - the membrane proton channel. CF(1) has five subunits: alpha(3), beta(3), gamma(1), delta(1), epsilon(1). CF(0) has four main subunits: a, b, b' and c.

It is found in the plastid. The protein resides in the chloroplast thylakoid membrane. Functionally, key component of the proton channel; it plays a direct role in the translocation of protons across the membrane. The chain is ATP synthase subunit a, chloroplastic from Tupiella akineta (Green alga).